We begin with the raw amino-acid sequence, 633 residues long: 1-deoxy-D-xylulose-5-phosphate synthase (633 aa).

Residues histidine 72 and 113-115 (GHS) contribute to the thiamine diphosphate site. Aspartate 144 is a binding site for Mg(2+). Residues 145-146 (GA), asparagine 173, tyrosine 284, and glutamate 367 contribute to the thiamine diphosphate site. Residue asparagine 173 coordinates Mg(2+).

This sequence belongs to the transketolase family. DXPS subfamily. Homodimer. It depends on Mg(2+) as a cofactor. Thiamine diphosphate serves as cofactor.

The enzyme catalyses D-glyceraldehyde 3-phosphate + pyruvate + H(+) = 1-deoxy-D-xylulose 5-phosphate + CO2. Its pathway is metabolic intermediate biosynthesis; 1-deoxy-D-xylulose 5-phosphate biosynthesis; 1-deoxy-D-xylulose 5-phosphate from D-glyceraldehyde 3-phosphate and pyruvate: step 1/1. Catalyzes the acyloin condensation reaction between C atoms 2 and 3 of pyruvate and glyceraldehyde 3-phosphate to yield 1-deoxy-D-xylulose-5-phosphate (DXP). This Bacillus licheniformis (strain ATCC 14580 / DSM 13 / JCM 2505 / CCUG 7422 / NBRC 12200 / NCIMB 9375 / NCTC 10341 / NRRL NRS-1264 / Gibson 46) protein is 1-deoxy-D-xylulose-5-phosphate synthase.